Here is a 154-residue protein sequence, read N- to C-terminus: Probable chemoreceptor glutamine deamidase CheD (154 aa).

This sequence belongs to the CheD family.

It carries out the reaction L-glutaminyl-[protein] + H2O = L-glutamyl-[protein] + NH4(+). Functionally, probably deamidates glutamine residues to glutamate on methyl-accepting chemotaxis receptors (MCPs), playing an important role in chemotaxis. This is Probable chemoreceptor glutamine deamidase CheD from Methanococcus vannielii (strain ATCC 35089 / DSM 1224 / JCM 13029 / OCM 148 / SB).